Here is a 1164-residue protein sequence, read N- to C-terminus: MAVSRATKVSAASNMMSGIPGAPKRVSFANIREPLEVPDLLDLQVQSFEWLVGDETWFQRRVDAGDENPVGGLEEVLSEISPIEDFSGSMSLSFSDPRFDEVKASVEECKDKDMTYAAPLFVTAEFTNHTTGEIKSQTVFMGDFPVMTDKGTFIINGTERVVVSQLVRSPGVYFDQSVDKTTDKDVYSVKIIPSRGAWLEFDVDKRDTVGVRIDRKRRQPVTVLLKALGWTAEAIRERFGFSETLMATLEKDHTAGQDEALLDIYRKLRPGEPPTKESAQTLLENLFFKEKRYDLARVGRYKVNKKLGLDLPFESGVLTEEDIVTTIEYLVRLHAGEAEMPDRGQGGDATIPVEVDDIDHFGNRRLRTVGELIQNQVRVGLSRMERVVRERMTTQDVEAITPQTLINIRPVVAAIKEFFGTSQLSQFMDQTNPIAGLTHKRRLSALGPGGLSRERAGMEVRDVHPSHYGRMCPIETPEGPNIGLIGSLATFARVNPFGFIETPYRKVVDGRVTDQIDYLTADEEDRFVKAQANTPIDDEGNFLADRVLGRRKGGEVELLAPTEIDYMDVSPRQMVSAATAMIPFLEHDDANRALMGANMQRQAVPLLRSEAPLVGTGMELRAAVDAGDVVTAEKAGVIEELCADYITVMADDGTRRTYRLQKFSRSNHGTCTNQKPIVNEGDRVEAGQVIADGPCTQNGEMALGKNLRVAIMPWEGHNYEDAIILSQRLVQDDVLTSIHIEEHEVDARDTKLGAEEITRDIPNVSEDVLADLDERGIIRIGAEVQGGDILVGKVTPKGETELTPEERLLRAIFGEKAREVRDTSLKVPHGETGKVIGVRVFNREDDDELPPGVNELVRVYVAQKRKIQDGDKLAGRHGNKGVIGKILPAEDMPFTEDGTPVDIILNTHGVPRRMNIGQILETHLGWIASQGWSIDGDPEWAKRLPEELYDVDPGTNTASPVFDGAREEEITGLLASTKPNRDGERMVKANGKAQLFDGRSGEPYPYPVAVGYMYILKLSHLVDDKIHARSTGPYSMITQQPLGGKAQFGGQRFGEMECWAMQAYGAAYTLQELLTIKSDDVVGRVKVYEAIVKGENIPEPGIPESFKVLLKELQSLCLNVEVLSSDGAAIEMRDGDDEDLERAAANLGINLSRNESPSVDDVVQ.

It belongs to the RNA polymerase beta chain family. In terms of assembly, the RNAP catalytic core consists of 2 alpha, 1 beta, 1 beta' and 1 omega subunit. When a sigma factor is associated with the core the holoenzyme is formed, which can initiate transcription.

The catalysed reaction is RNA(n) + a ribonucleoside 5'-triphosphate = RNA(n+1) + diphosphate. Functionally, DNA-dependent RNA polymerase catalyzes the transcription of DNA into RNA using the four ribonucleoside triphosphates as substrates. This chain is DNA-directed RNA polymerase subunit beta, found in Saccharopolyspora erythraea (strain ATCC 11635 / DSM 40517 / JCM 4748 / NBRC 13426 / NCIMB 8594 / NRRL 2338).